Reading from the N-terminus, the 156-residue chain is MVLVGPKTSASTVESFLKSVFHDDFKKAEKLERTELAYEINKTKHAQYFLVNLETERKNIAEFIRLSNINKEIWRHLVVNLDTEKGLNKVFKTHRKFGHDFRDQRSHHGQAGEFRKREPQQKSKEQSEFSKEKKSFSKSVTKKTVVSKPKETKEEK.

The disordered stretch occupies residues 98–156; the sequence is GHDFRDQRSHHGQAGEFRKREPQQKSKEQSEFSKEKKSFSKSVTKKTVVSKPKETKEEK. Basic and acidic residues predominate over residues 113 to 135; the sequence is EFRKREPQQKSKEQSEFSKEKKS. Positions 137 to 147 are enriched in low complexity; that stretch reads SKSVTKKTVVS.

The protein belongs to the bacterial ribosomal protein bS6 family.

Functionally, binds together with bS18 to 16S ribosomal RNA. This Mycoplasmopsis synoviae (strain 53) (Mycoplasma synoviae) protein is Small ribosomal subunit protein bS6.